The sequence spans 442 residues: DMATS-type prenyltransferase mfmD (442 aa).

Belongs to the tryptophan dimethylallyltransferase family.

The protein operates within secondary metabolite biosynthesis; terpenoid biosynthesis. Its function is as follows. Prenyltransferase; part of the gene cluster that mediates the biosynthesis of the phthalide-terpenoid hybrid 11'-O-desmethylfendlerol. Within the pathway, mfmD is responsible for farnesylation of the cyclopolic acid intermediate via an O-prenylation reaction. The biosynthesis of 11'-O-desmethylfendlerol begins with the NR-PKS mfmB that forms 3,5-dimethylorsellinic acid (DMOA), which is then transformed into the phthalide 5,7-dihydroxy-4-(hydroxymethyl)-6-methylphthalide by the cytochrome P450 monooxygenase mfmA and the hydrolase mfmC. Subsequently, the methyltransferase mfmE catalyzes 7-O-methylation to yield 5-hydroxy-4-(hydroxymethyl)-7-methoxy-6-methylphthalide, which undergoes C-3 hydroxylation by the cytochrome P450 monooxygenase mfmF. The resultant cyclopolic acid (2,5-dihydroxy-4-(hydroxymethyl)-7-methoxy-6-methylphthalide) is then farnesylated by the DMATS-type prenyltransferase mfmD to afford 5-O-farnesylcyclopolic acid. Finally, the Pyr4-family terpene cyclase mfmH cyclizes the farnesyl moiety of 5-O-farnesylcyclopolic acid into a drimane-like structure, thus completing the biosynthesis of 11'-O-desmethylfendlerol. This is DMATS-type prenyltransferase mfmD from Annulohypoxylon moriforme (Filamentous fungus).